The primary structure comprises 133 residues: Small ribosomal subunit protein uS11 (133 aa).

It belongs to the universal ribosomal protein uS11 family. Part of the 30S ribosomal subunit. Interacts with proteins S7 and S18. Binds to IF-3.

Functionally, located on the platform of the 30S subunit, it bridges several disparate RNA helices of the 16S rRNA. Forms part of the Shine-Dalgarno cleft in the 70S ribosome. The sequence is that of Small ribosomal subunit protein uS11 from Ralstonia nicotianae (strain ATCC BAA-1114 / GMI1000) (Ralstonia solanacearum).